We begin with the raw amino-acid sequence, 81 residues long: uncharacterized protein (81 aa).

Residues 11–34 (GSVSSSNKVSVANGSSSSSFGSNG) form a disordered region.

This is an uncharacterized protein from Dictyostelium discoideum (Social amoeba).